The following is a 485-amino-acid chain: Protein DETOXIFICATION 8 (485 aa).

Residues 1–26 (MENGFSLVPKEEEEEEDYSNEKSEDQ) are disordered. 12 helical membrane-spanning segments follow: residues 41–61 (FMAA…VISI), 74–94 (AVAI…FGLA), 118–138 (YGSM…WVFM), 159–179 (SIWL…TRFF), 188–208 (LFLS…LLVY), 212–232 (FGIV…VGLL), 263–283 (LAIP…LLIL), 297–317 (VLSI…AIGA), 338–358 (AANS…ISLY), 381–401 (ITPF…LSGV), 414–434 (ANIG…CFVV), and 442–462 (WIGI…VTFF).

The protein belongs to the multi antimicrobial extrusion (MATE) (TC 2.A.66.1) family.

Its subcellular location is the membrane. The sequence is that of Protein DETOXIFICATION 8 from Arabidopsis thaliana (Mouse-ear cress).